The following is a 723-amino-acid chain: tRNA (guanine(27)-N(2))-dimethyltransferase (723 aa).

The segment covering 1-10 (MENMAEEELL) has biased composition (acidic residues). Residues 1–72 (MENMAEEELL…SLASVPEEAE (72 aa)) form a disordered region. Position 23 is a phosphothreonine (Thr23). Residues 32–44 (PAADTALDSAPTP) show a composition bias toward low complexity. The segment covering 45 to 59 (DSAPAPALAPAPAPA) has biased composition (pro residues). Ser61 is subject to Phosphoserine. Positions 128 to 132 (HKLRR) match the Nucleolar localization signal motif. Residues 177–199 (YHCIICSATITRRTDMLGHVKRH) form a C2H2-type zinc finger. The Trm1 methyltransferase domain maps to 220–679 (EVLKETDTDI…ASLTQFKSIL (460 aa)). 4 residues coordinate S-adenosyl-L-methionine: Arg253, Asp300, Asp348, and Ala349. Residues Cys479, Cys482, Cys504, and Cys506 each contribute to the Zn(2+) site. Lys576 participates in a covalent cross-link: Glycyl lysine isopeptide (Lys-Gly) (interchain with G-Cter in SUMO2). Ser603 carries the post-translational modification Phosphoserine.

Belongs to the class I-like SAM-binding methyltransferase superfamily. Trm1 family.

The protein localises to the nucleus. Its subcellular location is the nucleolus. The enzyme catalyses guanosine(27) in tRNA(Tyr) + 2 S-adenosyl-L-methionine = N(2)-dimethylguanosine(27) in tRNA(Tyr) + 2 S-adenosyl-L-homocysteine + 2 H(+). In terms of biological role, specifically dimethylates a single guanine residue at position 27 of tRNA(Tyr) using S-adenosyl-L-methionine as donor of the methyl groups. Dimethylation at position 27 of tRNA(Tyr) is required for efficient translation of tyrosine codons. Also required to maintain 3-(3-amino-3-carboxypropyl)uridine (acp3U) in the D-loop of several cytoplasmic tRNAs. In Rattus norvegicus (Rat), this protein is tRNA (guanine(27)-N(2))-dimethyltransferase.